Consider the following 285-residue polypeptide: Ribosomal RNA small subunit methyltransferase I (285 aa).

It belongs to the methyltransferase superfamily. RsmI family.

Its subcellular location is the cytoplasm. It catalyses the reaction cytidine(1402) in 16S rRNA + S-adenosyl-L-methionine = 2'-O-methylcytidine(1402) in 16S rRNA + S-adenosyl-L-homocysteine + H(+). Functionally, catalyzes the 2'-O-methylation of the ribose of cytidine 1402 (C1402) in 16S rRNA. In Mycobacterium tuberculosis (strain CDC 1551 / Oshkosh), this protein is Ribosomal RNA small subunit methyltransferase I.